Reading from the N-terminus, the 445-residue chain is Sensor protein kinase CarS (445 aa).

The N-terminal stretch at 1–24 is a signal peptide; the sequence is MRSIQRRLSVGLFAVLLVVGLVLA. A helical membrane pass occupies residues 150-170; the sequence is FARVQWMGLGAGALALLLVLL. Residues 177–228 form the HAMP domain; sequence RRSLRPLEEVRLQIAQLQQGQRSQLDNQAPEELEPLVEQINHLLAHTEETLK. One can recognise a Histidine kinase domain in the interval 236 to 438; the sequence is NLGHALKTPL…RVSVELPLQK (203 aa). His-239 is subject to Phosphohistidine; by autocatalysis.

Its subcellular location is the membrane. The catalysed reaction is ATP + protein L-histidine = ADP + protein N-phospho-L-histidine.. Its function is as follows. Member of the two-component regulatory system CarS/CarR that regulates the expression of multiple genes involved in calcium signaling and homeostasis including CarO and CarP. May function as a membrane-associated protein kinase that phosphorylates CarR in response to environmental signals leading to activation of specific gene promoters. The sequence is that of Sensor protein kinase CarS (carS) from Pseudomonas aeruginosa (strain ATCC 15692 / DSM 22644 / CIP 104116 / JCM 14847 / LMG 12228 / 1C / PRS 101 / PAO1).